Here is a 280-residue protein sequence, read N- to C-terminus: Energy-coupling factor transporter ATP-binding protein EcfA2 (280 aa).

An ABC transporter domain is found at 3-245 (INLQNVSYTY…VSLLEKKQLG (243 aa)). Position 40-47 (40-47 (GHTGSGKS)) interacts with ATP.

The protein belongs to the ABC transporter superfamily. Energy-coupling factor EcfA family. Forms a stable energy-coupling factor (ECF) transporter complex composed of 2 membrane-embedded substrate-binding proteins (S component), 2 ATP-binding proteins (A component) and 2 transmembrane proteins (T component).

The protein resides in the cell membrane. Its function is as follows. ATP-binding (A) component of a common energy-coupling factor (ECF) ABC-transporter complex. Unlike classic ABC transporters this ECF transporter provides the energy necessary to transport a number of different substrates. This Streptococcus pyogenes serotype M3 (strain ATCC BAA-595 / MGAS315) protein is Energy-coupling factor transporter ATP-binding protein EcfA2.